The chain runs to 545 residues: Cytochrome P450 monooxygenase sdnB (545 aa).

Residue Asn-5 is glycosylated (N-linked (GlcNAc...) asparagine). A helical transmembrane segment spans residues 30–50; sequence SILALTPLQGIALFLCLFWGY. Asn-276 carries an N-linked (GlcNAc...) asparagine glycan. Residues 322–342 traverse the membrane as a helical segment; it reads LPILILIILVPAAHTTAMGIS. Asn-393 and Asn-476 each carry an N-linked (GlcNAc...) asparagine glycan. Position 486 (Cys-486) interacts with heme.

This sequence belongs to the cytochrome P450 family. The cofactor is heme.

Its subcellular location is the membrane. The protein operates within antibiotic biosynthesis. Cytochrome P450 monooxygenase; part of the gene cluster that mediates the biosynthesis of sordarin and hypoxysordarin, glycoside antibiotics with a unique tetracyclic diterpene aglycone structure. First, the geranylgeranyl diphosphate synthase sdnC constructs GGDP from farnesyl diphosphate and isopentenyl diphosphate. The diterpene cyclase sdnA then catalyzes the cyclization of GGDP to afford cycloaraneosene. Cycloaraneosene is then hydroxylated four times by the putative cytochrome P450 monooxygenases sdnB, sdnE, sdnF and sdnH to give a hydroxylated cycloaraneosene derivative such as cycloaraneosene-8,9,13,19-tetraol. Although the order of the hydroxylations is unclear, at least C8, C9 and C13 of the cycloaraneosene skeleton are hydroxylated before the sordaricin formation. Dehydration of the 13-hydroxy group of the hydroxylated cycloaraneosene derivative might be catalyzed by an unassigned hypothetical protein such as sdnG and sdnP to construct the cyclopentadiene moiety. The FAD-dependent oxidoreductase sdnN is proposed to catalyze the oxidation at C9 of the hydroxylated cycloaraneosene derivative and also catalyze the Baeyer-Villiger oxidation to give the lactone intermediate. The presumed lactone intermediate would be hydrolyzed to give an acrolein moiety and a carboxylate moiety. Then, [4+2]cycloaddition would occur between the acrolein moiety and the cyclopentadiene moiety to give sordaricin. SdnN might also be involved in the [4+2]cycloaddition after the hypothesized oxidation to accommodate the oxidized product and prompt the [4+2]cycloaddition. GDP-6-deoxy-D-altrose may be biosynthesized from GDP-D-mannose by the putative GDP-mannose-4,6-dehydratase sdnI and the short-chain dehydrogenase sdnK. The glycosyltransferase sdnJ catalyzes the attachment of 6-deoxy-D-altrose onto the 19-hydroxy group of sordaricin to give 4'-O-demethylsordarin. The methyltransferase sdnD would complete the biosynthesis of sordarin. Sordarin can be further modified into hypoxysordarin. The unique acyl chain at the 3'-hydroxy group of hypoxysordarin would be constructed by an iterative type I PKS sdnO and the trans-acting polyketide methyltransferase sdnL. SdnL would be responsible for the introduction of an alpha-methyl group of the polyketide chain. Alternatively, the beta-lactamase-like protein sdnR might be responsible for the cleavage and transfer of the polyketide chain from the PKS sdnO to sordarin. Two putative cytochrome P450 monooxygenases, sdnQ and sdnT, might catalyze the epoxidations of the polyketide chain to complete the biosynthesis of hypoxysordarin. Transcriptional regulators sdnM and sdnS are presumably encoded for the transcriptional regulation of the expression of the sdn gene cluster. This is Cytochrome P450 monooxygenase sdnB from Sordaria araneosa (Pleurage araneosa).